A 152-amino-acid chain; its full sequence is Protein Smg homolog (152 aa).

It belongs to the Smg family.

This chain is Protein Smg homolog, found in Nitrosomonas europaea (strain ATCC 19718 / CIP 103999 / KCTC 2705 / NBRC 14298).